The chain runs to 188 residues: Putative manganese efflux pump MntP (188 aa).

6 helical membrane-spanning segments follow: residues 3 to 23 (LSATILLAFGMSMDAFAASIG), 41 to 61 (LIFGVIETLTPLVGWGLGMLA), 62 to 82 (SQFVLEWNHWIAFILLVFLGG), 107 to 129 (LLVTTAFATSLDAMAVGVGLAFL), 143 to 163 (ATFLMSTLGIMVGRFIGPLLG), and 168 to 188 (ILGGIVLIGIGSEILWSHFAG).

Belongs to the MntP (TC 9.B.29) family.

The protein resides in the cell inner membrane. In terms of biological role, probably functions as a manganese efflux pump. This Klebsiella pneumoniae (strain 342) protein is Putative manganese efflux pump MntP.